Here is a 184-residue protein sequence, read N- to C-terminus: Photosystem I assembly protein Ycf4 (184 aa).

A run of 2 helical transmembrane segments spans residues 25–45 (ACIL…SYLG) and 57–77 (ILFV…LFIS).

It belongs to the Ycf4 family.

It is found in the plastid. The protein localises to the chloroplast thylakoid membrane. Seems to be required for the assembly of the photosystem I complex. The polypeptide is Photosystem I assembly protein Ycf4 (Cycas taitungensis (Prince sago)).